Here is a 118-residue protein sequence, read N- to C-terminus: Deoxynogalonate monooxygenase (118 aa).

The 87-residue stretch at V14–F100 folds into the ABM domain.

In terms of assembly, homodimer.

The catalysed reaction is deoxynogalonate + O2 = nogalonate + H2O + H(+). Its pathway is antibiotic biosynthesis. In terms of biological role, involved in the biosynthesis of the anthracycline (aromatic polyketide) antibiotic nogalamycin. Catalyzes the oxygenation of 12-deoxy-nogalonic acid at position 12 to yield nogalonic acid. In Streptomyces nogalater, this protein is Deoxynogalonate monooxygenase.